The chain runs to 130 residues: Lysozyme C (130 aa).

One can recognise a C-type lysozyme domain in the interval 1–130 (KVWERCALAR…VEQYVEGCDL (130 aa)). Cystine bridges form between C6/C128, C30/C116, C65/C81, and C77/C95. Residues E35 and D53 contribute to the active site.

This sequence belongs to the glycosyl hydrolase 22 family. As to quaternary structure, monomer.

The catalysed reaction is Hydrolysis of (1-&gt;4)-beta-linkages between N-acetylmuramic acid and N-acetyl-D-glucosamine residues in a peptidoglycan and between N-acetyl-D-glucosamine residues in chitodextrins.. Functionally, lysozymes have primarily a bacteriolytic function; those in tissues and body fluids are associated with the monocyte-macrophage system and enhance the activity of immunoagents. The chain is Lysozyme C (LYZ) from Camelus dromedarius (Dromedary).